We begin with the raw amino-acid sequence, 276 residues long: Dermonecrotic toxin LafSicTox-betaIE2 (276 aa).

Residue H5 is part of the active site. Positions 25 and 27 each coordinate Mg(2+). H41 (nucleophile) is an active-site residue. 2 cysteine pairs are disulfide-bonded: C45–C51 and C47–C189. Residue D85 participates in Mg(2+) binding.

The protein belongs to the arthropod phospholipase D family. Class II subfamily. Mg(2+) is required as a cofactor. As to expression, expressed by the venom gland.

It is found in the secreted. It carries out the reaction an N-(acyl)-sphingosylphosphocholine = an N-(acyl)-sphingosyl-1,3-cyclic phosphate + choline. The enzyme catalyses an N-(acyl)-sphingosylphosphoethanolamine = an N-(acyl)-sphingosyl-1,3-cyclic phosphate + ethanolamine. It catalyses the reaction a 1-acyl-sn-glycero-3-phosphocholine = a 1-acyl-sn-glycero-2,3-cyclic phosphate + choline. The catalysed reaction is a 1-acyl-sn-glycero-3-phosphoethanolamine = a 1-acyl-sn-glycero-2,3-cyclic phosphate + ethanolamine. Functionally, dermonecrotic toxins cleave the phosphodiester linkage between the phosphate and headgroup of certain phospholipids (sphingolipid and lysolipid substrates), forming an alcohol (often choline) and a cyclic phosphate. This toxin acts on sphingomyelin (SM). It may also act on ceramide phosphoethanolamine (CPE), lysophosphatidylcholine (LPC) and lysophosphatidylethanolamine (LPE), but not on lysophosphatidylserine (LPS), and lysophosphatidylglycerol (LPG). It acts by transphosphatidylation, releasing exclusively cyclic phosphate products as second products. Induces dermonecrosis, hemolysis, increased vascular permeability, edema, inflammatory response, and platelet aggregation. This is Dermonecrotic toxin LafSicTox-betaIE2 from Loxosceles aff. spinulosa (strain GJB-2008) (Recluse spider).